The following is an 872-amino-acid chain: Cilia- and flagella-associated protein 58 (872 aa).

Coiled-coil stretches lie at residues 106–595 (VDSA…ADGE) and 642–839 (ESQY…QKNK).

The protein belongs to the CFAP58 family. Interacts with ODFP2.

It is found in the cell projection. The protein localises to the cilium. It localises to the flagellum. The protein resides in the cytoplasm. Its subcellular location is the cytoskeleton. It is found in the microtubule organizing center. The protein localises to the centrosome. Its function is as follows. Has an essential role in the assembly and organization of the sperm flagellar axoneme. Required for the elongation of the primary cilium and sperm flagellar midpiece via modulation of the Notch signaling pathway. This chain is Cilia- and flagella-associated protein 58, found in Homo sapiens (Human).